We begin with the raw amino-acid sequence, 208 residues long: ATP-dependent Clp protease proteolytic subunit (208 aa).

Serine 98 functions as the Nucleophile in the catalytic mechanism. Histidine 123 is a catalytic residue.

The protein belongs to the peptidase S14 family. Fourteen ClpP subunits assemble into 2 heptameric rings which stack back to back to give a disk-like structure with a central cavity, resembling the structure of eukaryotic proteasomes.

The protein resides in the cytoplasm. The catalysed reaction is Hydrolysis of proteins to small peptides in the presence of ATP and magnesium. alpha-casein is the usual test substrate. In the absence of ATP, only oligopeptides shorter than five residues are hydrolyzed (such as succinyl-Leu-Tyr-|-NHMec, and Leu-Tyr-Leu-|-Tyr-Trp, in which cleavage of the -Tyr-|-Leu- and -Tyr-|-Trp bonds also occurs).. Functionally, cleaves peptides in various proteins in a process that requires ATP hydrolysis. Has a chymotrypsin-like activity. Plays a major role in the degradation of misfolded proteins. This chain is ATP-dependent Clp protease proteolytic subunit, found in Wolbachia sp. subsp. Brugia malayi (strain TRS).